We begin with the raw amino-acid sequence, 79 residues long: D-alanyl carrier protein (79 aa).

A Carrier domain is found at Met1–Met77. Ser35 carries the O-(pantetheine 4'-phosphoryl)serine modification.

This sequence belongs to the DltC family. 4'-phosphopantetheine is transferred from CoA to a specific serine of apo-DCP.

It localises to the cytoplasm. It participates in cell wall biogenesis; lipoteichoic acid biosynthesis. In terms of biological role, carrier protein involved in the D-alanylation of lipoteichoic acid (LTA). The loading of thioester-linked D-alanine onto DltC is catalyzed by D-alanine--D-alanyl carrier protein ligase DltA. The DltC-carried D-alanyl group is further transferred to cell membrane phosphatidylglycerol (PG) by forming an ester bond, probably catalyzed by DltD. D-alanylation of LTA plays an important role in modulating the properties of the cell wall in Gram-positive bacteria, influencing the net charge of the cell wall. The protein is D-alanyl carrier protein of Streptococcus suis (strain 98HAH33).